The sequence spans 387 residues: Methyltransferase phomM' (387 aa).

A methyltransferase domain region spans residues 98-223 (PHRPKDLHIL…QSVADLFTTL (126 aa)).

The protein belongs to the class I-like SAM-binding methyltransferase superfamily. Erg6/SMT family.

The protein operates within mycotoxin biosynthesis. Methyltransferase; part of the gene cluster that mediates the biosynthesis of the phomopsins, a group of hexapeptide mycotoxins which infects lupins and causes lupinosis disease in livestock. Within the pathway, phomM' acts as an S-adenosylmethionine-dependent alpha-N-methyltransferase that catalyzes two successive N-methylation reactions, converting N-desmethyl-phomopsin A to phomopsin A and phomopsin A further to an N,N-dimethylated congener called phomopsin E. The pathway starts with the processing of the precursor phomA' by several endopeptidases including kexin proteases as well as the cluster-specific S41 family peptidase phomP1 and the oligopeptidase phomG' to produce 10 identical copies of the hexapeptide Tyr-Val-Ile-Pro-Ile-Asp. After being excised from the precursor peptide, the core peptides are cyclized and modified post-translationally by enzymes encoded within the gene cluster. The timing and order of proteolysis of the phomA' precursor and PTMs are still unknown. Two tyrosinase-like enzymes, phomQ1' and phomQ2, catalyze the chlorination and hydroxylation of Tyr, respectively. PhomYb, is proposed to be involved in the construction of the macrocyclic structure. The other 4 ustYa family proteins may be involved in PTMs that generate the unique structure of phomopsin A. PhomYa' is required for the hydroxylation of C-beta of Tyr. PhomYc', phomYd', and phomYe are responsible for the biosynthesis of 2,3-dehydroisoleucine (dIle), 2,3-dehydroaspartic acid (dAsp), and 3,4-dehydroproline (dPro), respectively. While dIle formation by phomYc' is indispensable for the installation of dAsp by phomYd', the order of the other PTMs have not been elucidated yet. Most of the biosynthetic enzymes likely have broad substrate specificity, and thus, there might be a metabolic grid from a precursor to phomopsin A. The enzyme(s) responsible for the biosynthesis of 3,4-dehydrovaline (dVal) have also not been identified yet. Finally, phomM' acts as an S-adenosylmethionine-dependent alpha-N-methyltransferase that catalyzes two successive N-methylation reactions, converting N-desmethyl-phomopsin A to phomopsin A and phomopsin A further to an N,N-dimethylated congener called phomopsin E. The chain is Methyltransferase phomM' from Diaporthe leptostromiformis (Lupinosis disease fungus).